A 255-amino-acid chain; its full sequence is MSKRIVVISDTQIPFDDRKQLKAVIGYIGDTQPDEVVHIGDLMDYPSPSRWTKGTKEEFAQRIKPDSEQCKRRFLEPLRQVYDGPVGVHEGNHDRRPVDYLHQFAPALVEYVSSFQFQNLLDFDGFGVDVLPEFYKIAPGWISTHGHRGGVRVTQKSADTAYNAMMRFGTSVIIGHTHRQGIKPHTLGYGGNQKVLWSMEVGNLMNMKLAQYLKGATANWQSGFALLTVDGQHVKPELVPIVGGRFSVDGRVWEV.

In Mycobacterium (Mycobacteriophage L5), this protein is Gene 54 protein (54).